We begin with the raw amino-acid sequence, 306 residues long: Acetaldehyde dehydrogenase (306 aa).

12 to 15 contributes to the NAD(+) binding site; that stretch reads SGNI. Catalysis depends on Cys127, which acts as the Acyl-thioester intermediate. NAD(+) contacts are provided by residues 158-166 and Asn277; that span reads SAGPGTRAN.

This sequence belongs to the acetaldehyde dehydrogenase family.

It carries out the reaction acetaldehyde + NAD(+) + CoA = acetyl-CoA + NADH + H(+). The chain is Acetaldehyde dehydrogenase from Mycolicibacterium gilvum (strain PYR-GCK) (Mycobacterium gilvum (strain PYR-GCK)).